Reading from the N-terminus, the 462-residue chain is Ubiquitin carboxyl-terminal hydrolase calypso (462 aa).

The 232-residue stretch at 29-260 (GWLELESDPG…IRFNLMAVVP (232 aa)) folds into the UCH catalytic domain. Cys115 functions as the Nucleophile in the catalytic mechanism. His197 acts as the Proton donor in catalysis. Residues 357 to 385 (NYDKFICTFLSMLAHQGVLGELVSQHLLP) form the ULD domain. Residues 387 to 462 (KKIANRLNRQ…KGRNKCRKRK (76 aa)) form a positively charged C-terminal tail required for binding nucleosomes region. Over residues 413 to 447 (GTNAAGSKSQQQQQQTQQQPQQTQTAKNGKSPGKT) the composition is skewed to low complexity. The tract at residues 413 to 462 (GTNAAGSKSQQQQQQTQQQPQQTQTAKNGKSPGKTPGRRRKGRNKCRKRK) is disordered. Over residues 448–462 (PGRRRKGRNKCRKRK) the composition is skewed to basic residues.

The protein belongs to the peptidase C12 family. BAP1 subfamily. In terms of assembly, catalytic component of the polycomb repressive deubiquitinase (PR-DUB) complex, at least composed of caly/calypso, Asx and sba (MBD5/6 homolog). The PR-DUB complex associates with nucleosomes to mediate deubiquitination of histone H2AK118ub1 substrates; the association requires the positively charged C-terminal tail of caly, probably due to direct binding of DNA. Interacts (via ULD domain) with Asx (via DEUBAD domain); the interaction produces a stable heterodimer with a composite binding site for ubiquitin. Homodimerizes (via coiled-coil hinge-region between the UCH and ULD domains) to mediate assembly of 2 copies of the caly-Asx heterodimer into a bisymmetric tetramer; dimerization enhances PR-DUB association with nucleosomes.

Its subcellular location is the nucleus. The catalysed reaction is Thiol-dependent hydrolysis of ester, thioester, amide, peptide and isopeptide bonds formed by the C-terminal Gly of ubiquitin (a 76-residue protein attached to proteins as an intracellular targeting signal).. Functionally, catalytic component of the polycomb repressive deubiquitinase (PR-DUB) complex, a complex that specifically mediates deubiquitination of histone H2A monoubiquitinated at 'Lys-119' (H2AK118ub1). Mediates bisymmetric organization of the PR-DUB complex and is involved in association with nucleosomes to mediate deubiquitination. Does not deubiquitinate monoubiquitinated histone H2B. Required to maintain the transcriptionally repressive state of homeotic genes throughout development. The PR-DUB complex has weak or no activity toward 'Lys-48'- and 'Lys-63'-linked polyubiquitin chains. Polycomb group (PcG) protein. This chain is Ubiquitin carboxyl-terminal hydrolase calypso, found in Drosophila grimshawi (Hawaiian fruit fly).